Here is a 438-residue protein sequence, read N- to C-terminus: 23S rRNA (uracil(1939)-C(5))-methyltransferase RlmD (438 aa).

In terms of domain architecture, TRAM spans 10–68 (KTKNVQTITADILDLDYQGLGVAKINGKTWFIENALPHEKVECRILEDKRQYGHAIVKK). [4Fe-4S] cluster contacts are provided by Cys-81, Cys-87, Cys-90, and Cys-168. The S-adenosyl-L-methionine site is built by Gln-271, Phe-300, Asn-305, Glu-321, Asp-348, and Asp-369. Catalysis depends on Cys-395, which acts as the Nucleophile.

The protein belongs to the class I-like SAM-binding methyltransferase superfamily. RNA M5U methyltransferase family. RlmD subfamily.

The enzyme catalyses uridine(1939) in 23S rRNA + S-adenosyl-L-methionine = 5-methyluridine(1939) in 23S rRNA + S-adenosyl-L-homocysteine + H(+). Catalyzes the formation of 5-methyl-uridine at position 1939 (m5U1939) in 23S rRNA. This is 23S rRNA (uracil(1939)-C(5))-methyltransferase RlmD from Haemophilus influenzae (strain ATCC 51907 / DSM 11121 / KW20 / Rd).